We begin with the raw amino-acid sequence, 119 residues long: Large ribosomal subunit protein bL20c (119 aa).

This sequence belongs to the bacterial ribosomal protein bL20 family.

It is found in the plastid. The protein resides in the chloroplast. In terms of biological role, binds directly to 23S ribosomal RNA and is necessary for the in vitro assembly process of the 50S ribosomal subunit. It is not involved in the protein synthesizing functions of that subunit. The protein is Large ribosomal subunit protein bL20c of Saccharum officinarum (Sugarcane).